The primary structure comprises 132 residues: Small ribosomal subunit protein uS8 (132 aa).

This sequence belongs to the universal ribosomal protein uS8 family. In terms of assembly, part of the 30S ribosomal subunit. Contacts proteins S5 and S12.

Functionally, one of the primary rRNA binding proteins, it binds directly to 16S rRNA central domain where it helps coordinate assembly of the platform of the 30S subunit. The protein is Small ribosomal subunit protein uS8 of Macrococcus caseolyticus (strain JCSC5402) (Macrococcoides caseolyticum).